The following is a 780-amino-acid chain: MRTHTLGFPRIGGNRELKKAVEDYWKGAATRQQLEDAARAIRLRNWTLQREAGIDVVPVGDFALYDHILDAALLLGVIPPRFRNDDAPRDIDLMFRMARGQGGDRPVAPLEMTKWFDTNYHYLVPELDAATTFAPDAAPLLALIDEALAAGFTPKAVLPGPMTFLWLSKRVDGGTRWSLLPALLDAYGALLRDVAARCPLIQLDEPILSLDLADDIRSRFVPAYARLRVAVPDATLLLASYFAPVGDNLPVALSLPVDVVHLDLVRGPEDLTPALDILTRAAARQPADSGLPQSGSQSGIALSLGVINGRNVWRVDADKAAAPVRAAVAALGPDRVWVAPSCSLLHCPVDLDAETGLDPEVAQWLAFARQKCAEVRLVADMCDLNGRADAPETAAALARNRAALAARAASPVIHDPAVAVRAGTVTPEMGWRATPYTARIAAQRAALRLPVLPATTIGSFPQTVDIRAQRRKLRTGQITEAQYDAAMREAIATAIREQEALGLDVLVHGEPERNDMVEYFGEQLRGFCITANGWVQSYGTRCVKPPLLYGDVARPGPMTVRWITHAQSLTQKPVKGMLTGPVTIACWSFVRDDVPRPVVFRQLALAIRDEVADLEAAGIGVIQIDEPALREGLPLRRAAHAAYLDAAVGAFRLASSGVRDATQIHTHMCYCDFHDIIDHVAALDADVISLEASRSRMELLDVFATHAYPNEVGPGVYDIHSPRVPSIDEMETLLRAASRVLPLDRLWANPDCGLKTRDWPETRASLAHLVAAATRVREGG.

Residues 15-18 and K114 contribute to the 5-methyltetrahydropteroyltri-L-glutamate site; that span reads RELK. L-homocysteine-binding positions include 457–459 and E510; that span reads IGS. L-methionine contacts are provided by residues 457–459 and E510; that span reads IGS. 5-methyltetrahydropteroyltri-L-glutamate-binding positions include 541 to 542 and W587; that span reads RC. D625 lines the L-homocysteine pocket. D625 contributes to the L-methionine binding site. E631 contacts 5-methyltetrahydropteroyltri-L-glutamate. Zn(2+) contacts are provided by H667, C669, and E691. H720 functions as the Proton donor in the catalytic mechanism. C752 contributes to the Zn(2+) binding site.

This sequence belongs to the vitamin-B12 independent methionine synthase family. Zn(2+) is required as a cofactor.

The catalysed reaction is 5-methyltetrahydropteroyltri-L-glutamate + L-homocysteine = tetrahydropteroyltri-L-glutamate + L-methionine. Its pathway is amino-acid biosynthesis; L-methionine biosynthesis via de novo pathway; L-methionine from L-homocysteine (MetE route): step 1/1. Catalyzes the transfer of a methyl group from 5-methyltetrahydrofolate to homocysteine resulting in methionine formation. The protein is 5-methyltetrahydropteroyltriglutamate--homocysteine methyltransferase of Nitratidesulfovibrio vulgaris (strain DSM 19637 / Miyazaki F) (Desulfovibrio vulgaris).